We begin with the raw amino-acid sequence, 449 residues long: 1H-pyrrole-2-carbonyl-[peptidyl-carrier protein] chlorinase (449 aa).

Alanine 16, glutamate 35, arginine 41, histidine 43, valine 44, serine 47, arginine 123, isoleucine 147, and aspartate 316 together coordinate FAD. Serine 327 and glycine 328 together coordinate chloride. FAD is bound at residue valine 329.

This sequence belongs to the flavin-dependent halogenase family. Homodimer.

It carries out the reaction (1H-pyrrole-2-carbonyl)-[peptidyl-carrier protein] + 2 FADH2 + 2 chloride + 2 O2 = (4,5-dichloro-1H-pyrrole-2-carbonyl)-[peptidyl-carrier protein] + 2 FAD + 4 H2O. The catalysed reaction is (1H-pyrrole-2-carbonyl)-[peptidyl-carrier protein] + FADH2 + chloride + O2 = (5-chloro-1H-pyrrole-2-carbonyl)-[peptidyl-carrier protein] + FAD + 2 H2O. The enzyme catalyses (5-chloro-1H-pyrrole-2-carbonyl)-[peptidyl-carrier protein] + FADH2 + chloride + O2 = (4,5-dichloro-1H-pyrrole-2-carbonyl)-[peptidyl-carrier protein] + FAD + 2 H2O. It participates in antibiotic biosynthesis. Its function is as follows. Involved in the biosynthesis of the antibiotic pyoluteorin. Catalyzes the dichlorination of the pyrrole ring of pyrrolyl-S-PltL, generating the 5-chloropyrrolyl-S-PltL intermediate and then the 4,5-dichloropyrrolyl-S-PltL product. The chain is 1H-pyrrole-2-carbonyl-[peptidyl-carrier protein] chlorinase from Pseudomonas fluorescens (strain ATCC BAA-477 / NRRL B-23932 / Pf-5).